The sequence spans 301 residues: MEIVPVGEESLGVRSMCLYVETRDLRILLDAGVSLAPRRFGLPPHPLELQRAREVREQILRLAAYADVVTISHYHRDHFTVPYPSQYMATDSETYKAVYGEKTVLAKSPHDLNWSQRRRHYGLAKALDGVATVVYADGGEWRFGTTVVRASGPLWHGPAGSKTGRVIAFAVSDGEETLAFIPDVEGPVEEEAVHFAEEVKPTVVVVGGPPTYLGWDLASAVSNLKRIVDLRPRLLVLAHHLLRDVQWREKVGEVLQYAERRGVEVATYAKLAGREEQLLEARRRELYGETGRGEEAGEEEE.

Belongs to the UPF0282 family.

The protein is UPF0282 protein Pcal_1546 of Pyrobaculum calidifontis (strain DSM 21063 / JCM 11548 / VA1).